Consider the following 126-residue polypeptide: Protein ApaG (126 aa).

Residues 2-126 (SALDDSIRVE…FRLALPGLLH (125 aa)) enclose the ApaG domain.

The chain is Protein ApaG from Shewanella sp. (strain ANA-3).